The chain runs to 570 residues: Dihydroxy-acid dehydratase (570 aa).

Cys-61 lines the [2Fe-2S] cluster pocket. Mg(2+) is bound at residue Asp-94. Cys-135 is a [2Fe-2S] cluster binding site. Residues Asp-136 and Lys-137 each contribute to the Mg(2+) site. Lys-137 is subject to N6-carboxylysine. A [2Fe-2S] cluster-binding site is contributed by Cys-207. Glu-459 contacts Mg(2+). Ser-485 acts as the Proton acceptor in catalysis.

Belongs to the IlvD/Edd family. Homodimer. The cofactor is [2Fe-2S] cluster. It depends on Mg(2+) as a cofactor.

It carries out the reaction (2R)-2,3-dihydroxy-3-methylbutanoate = 3-methyl-2-oxobutanoate + H2O. The catalysed reaction is (2R,3R)-2,3-dihydroxy-3-methylpentanoate = (S)-3-methyl-2-oxopentanoate + H2O. It functions in the pathway amino-acid biosynthesis; L-isoleucine biosynthesis; L-isoleucine from 2-oxobutanoate: step 3/4. Its pathway is amino-acid biosynthesis; L-valine biosynthesis; L-valine from pyruvate: step 3/4. In terms of biological role, functions in the biosynthesis of branched-chain amino acids. Catalyzes the dehydration of (2R,3R)-2,3-dihydroxy-3-methylpentanoate (2,3-dihydroxy-3-methylvalerate) into 2-oxo-3-methylpentanoate (2-oxo-3-methylvalerate) and of (2R)-2,3-dihydroxy-3-methylbutanoate (2,3-dihydroxyisovalerate) into 2-oxo-3-methylbutanoate (2-oxoisovalerate), the penultimate precursor to L-isoleucine and L-valine, respectively. This is Dihydroxy-acid dehydratase from Lactococcus lactis subsp. cremoris (strain MG1363).